An 831-amino-acid chain; its full sequence is Periplasmic nitrate reductase (831 aa).

The tat-type signal signal peptide spans 1-29 (MKFTRREFMKAQAAASAAAVAGIALPATA). The region spanning 41–97 (IKWEKAPCRFCGTGCSVLVGTQHGRVVATQGDPESPVNKGLNCVKGYFLSKIMYGKD) is the 4Fe-4S Mo/W bis-MGD-type domain. Residues Cys-48, Cys-51, Cys-55, and Cys-83 each contribute to the [4Fe-4S] cluster site. Mo-bis(molybdopterin guanine dinucleotide) is bound by residues Lys-85, Gln-152, Asn-177, Cys-181, 214–221 (WGSNMAEM), 245–249 (STYTH), 264–266 (QSD), Met-374, Gln-378, Asn-484, 510–511 (SD), Lys-533, Asp-560, and 720–729 (TGRVLEHWHS). Trp-796 is a substrate binding site. The Mo-bis(molybdopterin guanine dinucleotide) site is built by Asn-804 and Lys-821.

The protein belongs to the prokaryotic molybdopterin-containing oxidoreductase family. NasA/NapA/NarB subfamily. As to quaternary structure, component of the periplasmic nitrate reductase NapAB complex composed of NapA and NapB. Requires [4Fe-4S] cluster as cofactor. The cofactor is Mo-bis(molybdopterin guanine dinucleotide). Predicted to be exported by the Tat system. The position of the signal peptide cleavage has not been experimentally proven.

It is found in the periplasm. The enzyme catalyses 2 Fe(II)-[cytochrome] + nitrate + 2 H(+) = 2 Fe(III)-[cytochrome] + nitrite + H2O. Catalytic subunit of the periplasmic nitrate reductase complex NapAB. Receives electrons from NapB and catalyzes the reduction of nitrate to nitrite. The chain is Periplasmic nitrate reductase from Psychromonas ingrahamii (strain DSM 17664 / CCUG 51855 / 37).